Reading from the N-terminus, the 51-residue chain is Ribosomal protein eL39-like 2 (51 aa).

Belongs to the eukaryotic ribosomal protein eL39 family. As to quaternary structure, component of a male germ cell-specific 60S large ribosomal subunit (LSU), which contains RPL10L and RPL39L, instead of RPL10 and RPL39 paralogs. The composition of the rest of the complex is similar to classical ribosomes. Testis specific.

The protein resides in the cytoplasm. In terms of biological role, male germ cell-specific component of the ribosome, which is required for the formation of sperm and male fertility. Replaces the RPL39 paralog in the ribosome of male germ cells. The ribosome is a large ribonucleoprotein complex responsible for the synthesis of proteins in the cell. The male germ cell-specific ribosome displays a ribosomal polypeptide exit tunnel of distinct size and charge states compared with the classical ribosome. It is responsible for regulating the biosynthesis and folding of a subset of male germ-cell-specific proteins that are essential for the formation of sperm. The protein is Ribosomal protein eL39-like 2 of Homo sapiens (Human).